A 990-amino-acid chain; its full sequence is MMNILLEELPHQEQALAAILASFTGIDHAQADHNHYANPLIKERYDDKANIDVKMETGTGKTYVYTRLMYELHQKYGLFKFVLVVPTPAIKEGARNFITSDYARQHFSQFYENTRMELCTINAGDFKVKSGRKNFPAQLLSFTDASRRDSHTIQVLLINAQMLNSASMTRDDYDQTLLGGLTSPVKGLQMTRPVVIIDEPHRFARDNKFYRAIQAIQPQMIVRFGATFPDIVEGKGKNKCVRKDYYRRQPQFDLNAVDSFNDGLVKGIDIYYPNLPEEQANNRYIVDSVTAKKLILRRGSKIAEVGVGENLADVDAGFEGSIEYAGSKMLSNDLELEAGMALVPGTFGASYQELIIQDAIDKHFDTEQANFLRSNEPENNAPRIKTLSLFFIDSIKSYRDDEGWLKVTFERLLKKKLTQLIDDYQRKTLPREVEYLSFLQATLASLHSDNQNVHAGYFGEDRGSGDEAIQAEVDDILKNKEKLLSFSDHHGNWETRRFLFSKWTLREGWDNPNVFVIAKLRSSGSESSKIQEVGRGLRLPVDENGHRVHQEEWPSRLSFLIGYDEKAFASMLVDEINRDSKVQLNEQKLDEAMITLIVTERQKVDPAFTELRLLEDLDDKKLINRSNEFKPSVTLNGETKSGFAWLLEFYPELTQARVRADRIRDNKPASRLRVRLRKENWEQLSSIWEQFSRRYMLQFERSGASLEQIAAEVLRDPALYIRQKPSQVQQRLVSNEDNGRFEVAQREGELAASEFMAGMKYGHFLKQLALRTSLPVNVLHPVLMAMLRDVLHGDSRYLSEISLDNMTRALQTRINAHFAQRHDYLPLDFQASTSVFDSTARQFREEISAEIVGKNVDENAIDDPRSLYQIPPLRYDSVDPELPLLKYDYPQQVSVFGKLPKRAIQIPKYTGGSTTPDFVYRIERQDADSVYLLVETKAENMRVGDQVILDAQRKFFDMLRRQNINVEFAEATSAPAVFSTINGLIEGKAN.

The tract at residues 50-545 (NIDVKMETGT…GLRLPVDENG (496 aa)) is helicase-like domain. The VRR-NUC domain occupies 884 to 970 (LLKYDYPQQV…RQNINVEFAE (87 aa)). The endonuclease domain stretch occupies residues 913-937 (STTPDFVYRIERQDADSVYLLVETK).

It belongs to the type III restriction-modification system Res protein family. As to quaternary structure, contains two different subunits: Res and Mod. The cofactor is Mg(2+). It depends on S-adenosyl-L-methionine as a cofactor.

The enzyme catalyses Endonucleolytic cleavage of DNA to give specific double-stranded fragments with terminal 5'-phosphates.. Functionally, a type III restriction enzyme that recognizes 2 inversely oriented double-stranded sequences 5'-CAGAG-3' and cleaves DNA 25-27 base pairs downstream. After binding to one recognition site undergoes random one-dimensional diffusion along DNA until it collides with a stationary enzyme bound to the second DNA site, which is when DNA cleavage occurs. DNA restriction requires both the Res and Mod subunits. This chain is Type III restriction-modification enzyme StyLTI Res subunit, found in Salmonella typhimurium (strain LT2 / SGSC1412 / ATCC 700720).